Reading from the N-terminus, the 370-residue chain is 3-isopropylmalate dehydrogenase (370 aa).

Substrate contacts are provided by Arg99, Arg109, Arg137, and Asp227. Mg(2+) contacts are provided by Asp227, Asp251, and Asp255. 290-302 serves as a coordination point for NAD(+); the sequence is GSAPDIAGQDKAN.

The protein belongs to the isocitrate and isopropylmalate dehydrogenases family. LeuB type 1 subfamily. Homodimer. Mg(2+) is required as a cofactor. Mn(2+) serves as cofactor.

The protein resides in the cytoplasm. The catalysed reaction is (2R,3S)-3-isopropylmalate + NAD(+) = 4-methyl-2-oxopentanoate + CO2 + NADH. It participates in amino-acid biosynthesis; L-leucine biosynthesis; L-leucine from 3-methyl-2-oxobutanoate: step 3/4. In terms of biological role, catalyzes the oxidation of 3-carboxy-2-hydroxy-4-methylpentanoate (3-isopropylmalate) to 3-carboxy-4-methyl-2-oxopentanoate. The product decarboxylates to 4-methyl-2 oxopentanoate. The protein is 3-isopropylmalate dehydrogenase of Rhodospirillum rubrum (strain ATCC 11170 / ATH 1.1.1 / DSM 467 / LMG 4362 / NCIMB 8255 / S1).